The following is a 120-amino-acid chain: NAD(P)H-quinone oxidoreductase subunit 3 (120 aa).

A run of 3 helical transmembrane segments spans residues 10 to 30 (FLGF…TNLI), 64 to 84 (MFAL…PWAV), and 89 to 109 (LGLL…IALA).

This sequence belongs to the complex I subunit 3 family. NDH-1 can be composed of about 15 different subunits; different subcomplexes with different compositions have been identified which probably have different functions.

It localises to the cellular thylakoid membrane. It carries out the reaction a plastoquinone + NADH + (n+1) H(+)(in) = a plastoquinol + NAD(+) + n H(+)(out). It catalyses the reaction a plastoquinone + NADPH + (n+1) H(+)(in) = a plastoquinol + NADP(+) + n H(+)(out). Its function is as follows. NDH-1 shuttles electrons from an unknown electron donor, via FMN and iron-sulfur (Fe-S) centers, to quinones in the respiratory and/or the photosynthetic chain. The immediate electron acceptor for the enzyme in this species is believed to be plastoquinone. Couples the redox reaction to proton translocation, and thus conserves the redox energy in a proton gradient. Cyanobacterial NDH-1 also plays a role in inorganic carbon-concentration. The polypeptide is NAD(P)H-quinone oxidoreductase subunit 3 (Prochlorococcus marinus (strain MIT 9515)).